The following is a 242-amino-acid chain: Polycomb group RING finger protein 3 (242 aa).

An RING-type zinc finger spans residues 17-56 (CRLCSGYLIDATTVTECLHTFCRSCLVKYLEENNTCPTCR). Residues 115-149 (AKQHLDSHRNGETKADDSSNKEAAEEKPEEDNDYH) are disordered. Over residues 117–140 (QHLDSHRNGETKADDSSNKEAAEE) the composition is skewed to basic and acidic residues. Residues 132 to 242 (SSNKEAAEEK…LHYRPKMDLL (111 aa)) form an interaction with BCORL1 region.

As to quaternary structure, component of a PRC1-like complex that contains PCGF3, RNF2 and RYBP. Interacts with CBX6, CBX7 and CBX8. Interacts with BCORL1.

It localises to the nucleus. Its subcellular location is the nucleoplasm. In terms of biological role, component of a Polycomb group (PcG) multiprotein PRC1-like complex, a complex class required to maintain the transcriptionally repressive state of many genes, including Hox genes, throughout development. PcG PRC1 complex acts via chromatin remodeling and modification of histones; it mediates monoubiquitination of histone H2A 'Lys-119', rendering chromatin heritably changed in its expressibility. Within the PRC1-like complex, regulates RNF2 ubiquitin ligase activity. Plays a redundant role with PCGF5 as part of a PRC1-like complex that mediates monoubiquitination of histone H2A 'Lys-119' on the X chromosome and is required for normal silencing of one copy of the X chromosome in XX females. This is Polycomb group RING finger protein 3 (PCGF3) from Homo sapiens (Human).